The following is a 337-amino-acid chain: GDP-fucose transporter, Golgi (337 aa).

The next 8 helical transmembrane spans lie at 13–35 (NKYLKIFFVVSLYWCTSILTVFV), 45–67 (VNLGAPLFMSWFQCVVSTVICFV), 95–117 (ILPLSVLYTLMIGANNLSLSYVT), 121–140 (YYIGRSLTTVFSVVLTYVIL), 145–163 (SFKCLLCCGAIVVGFWLGV), 173–192 (SWRGTIFGVLSSLALAMFSI), 205–227 (VWLLSYYNNLYSTLLFLPLIIIN), and 242–264 (SWFWAAMTLSGLCGFAIGFVTAL).

The protein belongs to the TPT transporter family. SLC35C subfamily.

It localises to the golgi apparatus membrane. Its function is as follows. Involved in GDP-fucose import from the cytoplasm into the Golgi lumen. Plays a major role in the fucosylation of N-glycans. Functions redundantly with Efr in the O-fucosylation of Notch, positively regulating Notch signaling. The protein is GDP-fucose transporter, Golgi of Drosophila melanogaster (Fruit fly).